The primary structure comprises 457 residues: MSNKAWGGRFQSEPEAWVDAFNASINFDHLLIDEDIQGSIAHATMLAQQGILTEDESNTIIKGLQEIQQDYHDGKIEFTEALEDIHLNIEHELIERIGAVGGKLHTGRSRNDQVATDLHLYTKKAVKEIIHLIHTLQETIVKLADDHVDTIMPGYTHLQRAQPISFAHHVMTYFWMLERDKNRFEDALKRIDINPLGAAALSGTTHPIDRAKTQELLDFAALYENSLDAVSDRDFVVETLNDISLVMIHLSRFSEEIIFWSSDEAKFITLSDSFSTGSSIMPQKKNPDMAELIRGKTGRTTGHLMSMLMTLKGLPLAYNKDMQEDKEGLFDAVHTVTGSLRIFEGMLASLTVNTDRLNETVHQDFSNATELADYLVEKDVPFREAHAIVGQIVYWCIQHDCYLLDVPLEKYQEFSSSIDDTIYSYLKPENCLKRRKSYGSTGQESVRHQIKVAKDLL.

Belongs to the lyase 1 family. Argininosuccinate lyase subfamily.

It localises to the cytoplasm. It catalyses the reaction 2-(N(omega)-L-arginino)succinate = fumarate + L-arginine. The protein operates within amino-acid biosynthesis; L-arginine biosynthesis; L-arginine from L-ornithine and carbamoyl phosphate: step 3/3. This chain is Argininosuccinate lyase, found in Staphylococcus carnosus (strain TM300).